The sequence spans 392 residues: Nucleolysin TIAR (392 aa).

RRM domains follow at residues 9 to 102 and 114 to 192; these read RTLY…WATT and FHVF…WATR. Lys-139 is subject to N6-acetyllysine. Ser-218 is modified (phosphoserine). Residues 222 to 294 form the RRM 3 domain; sequence CTVYCGGIAS…HVVKCYWGKE (73 aa). The interval 363–392 is disordered; it reads GAQPPQGQAPPPVIPPPNQAGYGMASFPTQ. The span at 369-380 shows a compositional bias: pro residues; the sequence is GQAPPPVIPPPN.

In terms of assembly, interacts with FASTK. Phosphorylated by MAPK14 following DNA damage, releasing TIAR from GADD45A mRNA. Expressed both in primordial germ cells (PGCs) and in neighboring somatic cells.

Its subcellular location is the nucleus. It is found in the cytoplasm. It localises to the stress granule. The protein localises to the cytolytic granule. In terms of biological role, RNA-binding protein involved in alternative pre-RNA splicing and in cytoplasmic stress granules formation. Shows a preference for uridine-rich RNAs. Activates splicing of alternative exons with weak 5' splice sites followed by a U-rich stretch on its own pre-mRNA and on TIA1 mRNA. Promotes the inclusion of TIA1 exon 5 to give rise to the long isoform (isoform a) of TIA1. Acts downstream of the stress-induced phosphorylation of EIF2S1/EIF2A to promote the recruitment of untranslated mRNAs to cytoplasmic stress granules (SG). Possesses nucleolytic activity against cytotoxic lymphocyte target cells. May be involved in apoptosis. The polypeptide is Nucleolysin TIAR (Tial1) (Mus musculus (Mouse)).